A 71-amino-acid polypeptide reads, in one-letter code: MGIVKKILRMTGLEKHDYVRYMGKNYKCLKCGHDLYIPKHNEFHYTVKEFRGCKGEQRMKKVKRHRNGGYA.

This is an uncharacterized protein from Bacillus phage SPP1 (Bacteriophage SPP1).